We begin with the raw amino-acid sequence, 128 residues long: Azurin (128 aa).

The 128-residue stretch at alanine 1–lysine 128 folds into the Plastocyanin-like domain. Cysteine 3 and cysteine 26 are joined by a disulfide. Histidine 46, cysteine 112, histidine 117, and methionine 121 together coordinate Cu cation.

It is found in the periplasm. Its function is as follows. Transfers electrons from cytochrome c551 to cytochrome oxidase. In Pseudomonas fluorescens biotype A, this protein is Azurin.